The following is a 412-amino-acid chain: Probable tRNA sulfurtransferase (412 aa).

Positions 58 to 163 (DEVIKQLGYV…SEGTYIYVGK (106 aa)) constitute a THUMP domain. ATP contacts are provided by residues 181-182 (ML), 206-207 (HF), Arg265, Gly287, and Gln296.

Belongs to the ThiI family.

It is found in the cytoplasm. The catalysed reaction is [ThiI sulfur-carrier protein]-S-sulfanyl-L-cysteine + a uridine in tRNA + 2 reduced [2Fe-2S]-[ferredoxin] + ATP + H(+) = [ThiI sulfur-carrier protein]-L-cysteine + a 4-thiouridine in tRNA + 2 oxidized [2Fe-2S]-[ferredoxin] + AMP + diphosphate. It catalyses the reaction [ThiS sulfur-carrier protein]-C-terminal Gly-Gly-AMP + S-sulfanyl-L-cysteinyl-[cysteine desulfurase] + AH2 = [ThiS sulfur-carrier protein]-C-terminal-Gly-aminoethanethioate + L-cysteinyl-[cysteine desulfurase] + A + AMP + 2 H(+). Its pathway is cofactor biosynthesis; thiamine diphosphate biosynthesis. In terms of biological role, catalyzes the ATP-dependent transfer of a sulfur to tRNA to produce 4-thiouridine in position 8 of tRNAs, which functions as a near-UV photosensor. Also catalyzes the transfer of sulfur to the sulfur carrier protein ThiS, forming ThiS-thiocarboxylate. This is a step in the synthesis of thiazole, in the thiamine biosynthesis pathway. The sulfur is donated as persulfide by IscS. This Acholeplasma laidlawii (strain PG-8A) protein is Probable tRNA sulfurtransferase.